The following is a 919-amino-acid chain: Probable disease resistance protein At4g27220 (919 aa).

Coiled-coil stretches lie at residues 1 to 30 (MFRS…LKRS) and 74 to 95 (VEIL…KKIS). The NB-ARC domain occupies 121–399 (MLDKLKDCLK…AEGLLDGQHH (279 aa)). 141 to 148 (GMGGVGKT) is a binding site for ATP. LRR repeat units lie at residues 447–468 (GEGF…QDKF), 469–492 (VSSV…VIEG), 494–516 (ETLV…FLQA), 519–540 (NLRI…FSNL), 542–564 (SLRS…ESLV), 565–587 (KLQF…EALS), 588–610 (SLRY…TILQ), and 611–635 (LSSL…EREG).

The protein belongs to the disease resistance NB-LRR family.

In terms of biological role, probable disease resistance protein. The chain is Probable disease resistance protein At4g27220 from Arabidopsis thaliana (Mouse-ear cress).